Reading from the N-terminus, the 622-residue chain is MKTLLIHSDYLEFEAKEKTKIAEDADVLSGKMDECLTVFIAVEKDDESDPDAVVKNAVEEIVKTADNLKVKNVVVYPYAHLSSDLGSPATAKEILAEIEKELSGNYEVLRAPFGWYKAFKISCKGHPLSELSRKITTERKEEVKKEKIVSKFYIINGENLELTEVNDEIISKMEDKGLLALLKHELDIKEEGTEKGEPPHVKYIKEKEICDYEPSSDAGHFRWYPKGKLIRDLLSDYVYNLVVERGGMPVETPVMYDLQNNAIREHADKFGERQYRFKQGNKDLMLRFAACFGQFMMKKDMYLLPKHMPLKLYELSTYSFRYEQRGELVGLKRLRAFTMPDMHTVCIDMKQAMEAFEDQLWMGLKTGDDFKTPYAIIFRFTEDFFEENKDWFFGMAKEYKQKYGKDAILEILPGRKHYWVGKVDMAVVDSFGRPIENPTVQIDVESAERFGIVVHDGDKKVHPIILHCSPTGSVERVLCGLLENAYLNTLENKPPALPTWLTPIQARVIPVGDKHEEFALEVANKLRASGIRADFDDREDSMGKKVRNAGTDWVNYVVVIGDNEMETGKLTVTIREESELKKAKKEALTVEELIEKITSDVKDAPKRPLPLPMKCSVQPIFR.

The segment at 1-141 (MKTLLIHSDY…SRKITTERKE (141 aa)) is editing domain. The tract at residues 199–498 (PHVKYIKEKE…TLENKPPALP (300 aa)) is catalytic. Residues C291, H343, and H467 each coordinate Zn(2+).

The protein belongs to the class-II aminoacyl-tRNA synthetase family. In terms of assembly, homodimer. The cofactor is Zn(2+).

Its subcellular location is the cytoplasm. The enzyme catalyses tRNA(Thr) + L-threonine + ATP = L-threonyl-tRNA(Thr) + AMP + diphosphate + H(+). Functionally, catalyzes the attachment of threonine to tRNA(Thr) in a two-step reaction: L-threonine is first activated by ATP to form Thr-AMP and then transferred to the acceptor end of tRNA(Thr). Also edits incorrectly charged L-seryl-tRNA(Thr). The polypeptide is Threonine--tRNA ligase (Methanococcus maripaludis (strain C7 / ATCC BAA-1331)).